A 348-amino-acid polypeptide reads, in one-letter code: Rhodopsin (348 aa).

M1 bears the N-acetylmethionine mark. The Extracellular portion of the chain corresponds to 1-36 (MNGTEGPNFYVPFSNITGVVRSPFEQPQYYLAEPWQ). Residues N2 and N15 are each glycosylated (N-linked (GlcNAc...) asparagine). A helical transmembrane segment spans residues 37-61 (FSMLAAYMFLLIVLGFPINFLTLYV). Topologically, residues 62-73 (TVQHKKLRTPLN) are cytoplasmic. The chain crosses the membrane as a helical span at residues 74-96 (YILLNLAVADLFMVFGGFTTTLY). Over 97–110 (TSLHGYFVFGPTGC) the chain is Extracellular. Residues C110 and C187 are joined by a disulfide bond. The chain crosses the membrane as a helical span at residues 111–133 (NLEGFFATLGGEIGLWSLVVLAI). The 'Ionic lock' involved in activated form stabilization motif lies at 134–136 (ERY). The Cytoplasmic segment spans residues 134–152 (ERYVVVCKPMSNFRFGENH). Residues 153–173 (AIMGVAFTWVMALACAAPPLV) traverse the membrane as a helical segment. At 174–202 (GWSRYIPEGMQCSCGIDYYTLKPEVNNES) the chain is on the extracellular side. Zn(2+) is bound at residue E201. A helical transmembrane segment spans residues 203–224 (FVIYMFVVHFTIPMIVIFFCYG). At 225 to 252 (QLVFTVKEAAAQQQESATTQKAEKEVTR) the chain is on the cytoplasmic side. A helical transmembrane segment spans residues 253–274 (MVIIMVIFFLICWLPYASVAMY). At 275–286 (IFTHQGSNFGPI) the chain is on the extracellular side. A Zn(2+)-binding site is contributed by Q279. The helical transmembrane segment at 287–308 (FMTLPAFFAKTASIYNPIIYIM) threads the bilayer. K296 carries the N6-(retinylidene)lysine modification. Residues 309-348 (MNKQFRNCMLTSLCCGKNPLGDDEASATASKTETSQVAPA) lie on the Cytoplasmic side of the membrane. Residues C322 and C323 are each lipidated (S-palmitoyl cysteine). The interval 330-348 (DDEASATASKTETSQVAPA) is interaction with SAG. Phosphoserine is present on S334. T336 carries the post-translational modification Phosphothreonine. A Phosphoserine modification is found at S338. T340 and T342 each carry phosphothreonine. The residue at position 343 (S343) is a Phosphoserine.

It belongs to the G-protein coupled receptor 1 family. Opsin subfamily. As to quaternary structure, homodimer. May form a complex composed of RHO, GRK1 and RCVRN in a Ca(2+)-dependent manner; RCVRN prevents the interaction between GRK1 and RHO. Interacts with GRK1. Interacts (phosphorylated form) with SAG. Interacts with GNAT1. Interacts with GNAT3. SAG and G-proteins compete for a common binding site. Interacts with PRCD; the interaction promotes PRCD stability. Forms a complex with ASAP1 and ARF4. Forms a complex with ASAP1, RAB11A, Rabin8/RAB3IP, ARF4 and RAB11FIP3; the complex regulates Golgi-to-cilia rhodopsin/RHO transport in photoreceptors. Phosphorylated on some or all of the serine and threonine residues present in the C-terminal region. Post-translationally, contains one covalently linked retinal chromophore. Upon light absorption, the covalently bound 11-cis-retinal is converted to all-trans-retinal. After hydrolysis of the Schiff base and release of the covalently bound all-trans-retinal, active rhodopsin is regenerated by binding of a fresh molecule of 11-cis-retinal.

Its subcellular location is the membrane. The protein localises to the cell projection. The protein resides in the cilium. It is found in the photoreceptor outer segment. Functionally, photoreceptor required for image-forming vision at low light intensity. Required for photoreceptor cell viability after birth. Light-induced isomerization of 11-cis to all-trans retinal triggers a conformational change that activates signaling via G-proteins. Subsequent receptor phosphorylation mediates displacement of the bound G-protein alpha subunit by the arrestin SAG and terminates signaling. In Rattus norvegicus (Rat), this protein is Rhodopsin (Rho).